Here is a 553-residue protein sequence, read N- to C-terminus: CDP-diacylglycerol--glycerol-3-phosphate 3-phosphatidyltransferase, mitochondrial (553 aa).

Residues 1–25 (MAAPAAGPVFWRRLLGLLPGRPGLA) constitute a mitochondrion transit peptide. Ser-46 is modified (phosphoserine). ATP is bound at residue 121 to 128 (ASLYLGTG). PLD phosphodiesterase domains lie at 212 to 238 (TIGLQHIKVYLFDNNVILSGANLSDSY) and 457 to 490 (RGWTFHAKGLWLYLAGSSLPCLTLIGSPNFGYRS). Residues His-217, Lys-219, and Asp-224 contribute to the active site.

This sequence belongs to the CDP-alcohol phosphatidyltransferase class-II family. As to expression, widely expressed with higher expression in testis, liver and brain.

Its subcellular location is the mitochondrion. The enzyme catalyses a CDP-1,2-diacyl-sn-glycerol + sn-glycerol 3-phosphate = a 1,2-diacyl-sn-glycero-3-phospho-(1'-sn-glycero-3'-phosphate) + CMP + H(+). Its pathway is phospholipid metabolism; phosphatidylglycerol biosynthesis; phosphatidylglycerol from CDP-diacylglycerol: step 1/2. With respect to regulation, activated by calcium and magnesium and inhibited by other bivalent cations. Its function is as follows. Functions in the biosynthesis of the anionic phospholipids phosphatidylglycerol and cardiolipin. In Mus musculus (Mouse), this protein is CDP-diacylglycerol--glycerol-3-phosphate 3-phosphatidyltransferase, mitochondrial (Pgs1).